A 739-amino-acid polypeptide reads, in one-letter code: uncharacterized protein (739 aa).

8 consecutive transmembrane segments (helical) span residues 53 to 73 (LALGIALWMELGSPQWAALTV), 90 to 110 (WHLFGMVVGVISGITLVAAIP), 114 to 134 (LMFILLLAVGIGTFCMIGTFM), 178 to 198 (TYILLGIVLEASISGLFQLGL), 421 to 441 (LIWICTAWPSGLTFIMFVCIV), 457 to 477 (AFLRGACCAVVAAGILNLALM), 491 to 511 (GLAMMIGGLAFAYPPLTLPAV), and 532 to 552 (IVYFNTALPLVLGLLYASWMY).

Belongs to the aromatic acid exporter ArAE (TC 2.A.85) family.

Its subcellular location is the cell membrane. This is an uncharacterized protein from Gluconobacter oxydans (strain 621H) (Gluconobacter suboxydans).